Here is a 374-residue protein sequence, read N- to C-terminus: N5-carboxyaminoimidazole ribonucleotide synthase (374 aa).

ATP-binding positions include arginine 108, lysine 148, 153 to 159 (GYDGKGQ), 183 to 186 (EQFL), glutamate 191, histidine 214, and 266 to 267 (NE). Residues 112 to 296 (KQTLQKAGSK…QFDTHILAVT (185 aa)) enclose the ATP-grasp domain.

Belongs to the PurK/PurT family. In terms of assembly, homodimer.

It carries out the reaction 5-amino-1-(5-phospho-beta-D-ribosyl)imidazole + hydrogencarbonate + ATP = 5-carboxyamino-1-(5-phospho-D-ribosyl)imidazole + ADP + phosphate + 2 H(+). Its pathway is purine metabolism; IMP biosynthesis via de novo pathway; 5-amino-1-(5-phospho-D-ribosyl)imidazole-4-carboxylate from 5-amino-1-(5-phospho-D-ribosyl)imidazole (N5-CAIR route): step 1/2. Its function is as follows. Catalyzes the ATP-dependent conversion of 5-aminoimidazole ribonucleotide (AIR) and HCO(3)(-) to N5-carboxyaminoimidazole ribonucleotide (N5-CAIR). In Staphylococcus haemolyticus (strain JCSC1435), this protein is N5-carboxyaminoimidazole ribonucleotide synthase.